A 372-amino-acid polypeptide reads, in one-letter code: Aminomethyltransferase (372 aa).

The protein belongs to the GcvT family. In terms of assembly, the glycine cleavage system is composed of four proteins: P, T, L and H.

The enzyme catalyses N(6)-[(R)-S(8)-aminomethyldihydrolipoyl]-L-lysyl-[protein] + (6S)-5,6,7,8-tetrahydrofolate = N(6)-[(R)-dihydrolipoyl]-L-lysyl-[protein] + (6R)-5,10-methylene-5,6,7,8-tetrahydrofolate + NH4(+). Functionally, the glycine cleavage system catalyzes the degradation of glycine. In Burkholderia ambifaria (strain MC40-6), this protein is Aminomethyltransferase.